The primary structure comprises 154 residues: Ribonuclease H (154 aa).

Positions 1–142 constitute an RNase H type-1 domain; the sequence is MLKQVEIFTD…CDELARRAAG (142 aa). Mg(2+) contacts are provided by D10, E48, D70, and D134.

The protein belongs to the RNase H family. As to quaternary structure, monomer. It depends on Mg(2+) as a cofactor.

The protein resides in the cytoplasm. The catalysed reaction is Endonucleolytic cleavage to 5'-phosphomonoester.. Functionally, endonuclease that specifically degrades the RNA of RNA-DNA hybrids. The sequence is that of Ribonuclease H from Edwardsiella ictaluri (strain 93-146).